A 1165-amino-acid polypeptide reads, in one-letter code: Serine/threonine-protein kinase/endoribonuclease ireA (1165 aa).

Residues 1 to 27 (MRWRLPGARTTLPASVALLLLPILVAP) form the signal peptide. Residues 28–504 (QQLQEHDDLP…STIIRKGWDN (477 aa)) lie on the Lumenal side of the membrane. N-linked (GlcNAc...) asparagine glycosylation occurs at N152. A helical membrane pass occupies residues 505-525 (AVDIFVTILLLFFGAFIYFNS). Residues 526–1165 (HNIQELAKQK…RFKRYFTPVE (640 aa)) are Cytoplasmic-facing. Residues 547–668 (QPPLSTPSTP…SEGESKDQAD (122 aa)) form a disordered region. Basic and acidic residues-rich tracts occupy residues 591-600 (ATPKPKRDRS) and 611-620 (KIREPSRGPD). Positions 637 to 655 (PKKKARRGRRGGKNHRRGK) are enriched in basic residues. Positions 656-668 (KPDSEGESKDQAD) are enriched in basic and acidic residues. Residues 711 to 1026 (VFSDVVLGHG…ASAVLMHPFF (316 aa)) enclose the Protein kinase domain. ATP contacts are provided by residues 717–725 (LGHGSHGTV) and K739. D832 serves as the catalytic Proton acceptor. Residues 899-919 (AIQGGESQHTESSEPAVVDPQ) are disordered. The KEN domain maps to 1029–1163 (PSDRLSFLCD…IDRFKRYFTP (135 aa)).

It belongs to the protein kinase superfamily. Ser/Thr protein kinase family. Homodimer; in response to the accumulation of unfolded proteins. Requires Mg(2+) as cofactor. In terms of processing, autophosphorylated mainly on serine residues.

Its subcellular location is the membrane. The catalysed reaction is L-seryl-[protein] + ATP = O-phospho-L-seryl-[protein] + ADP + H(+). The enzyme catalyses L-threonyl-[protein] + ATP = O-phospho-L-threonyl-[protein] + ADP + H(+). 8-formyl-7-hydroxy-4-methylcoumarin inhibits the endonuclease activity and prebvent the splicing if the hacA mRNA. The kinase domain is activated by trans-autophosphorylation. Kinase activity is required for activation of the endoribonuclease domain. Senses unfolded proteins in the lumen of the endoplasmic reticulum (ER) via its N-terminal domain which leads to enzyme auto-activation. The active endoribonuclease domain responds by cleaving an intron from the downstream cytoplasmic mRNA hacA, allowing for the translation of a transcription factor that coordinates a series of adaptive responses that are collectively known as the unfolded protein response (UPR). In the absence of ER stress, ireA controls dual signaling circuits that are both hacA-dependent and hacA-independent and which contribute to the expression of traits that are essential for virulence. The chain is Serine/threonine-protein kinase/endoribonuclease ireA from Aspergillus fumigatus (strain ATCC MYA-4609 / CBS 101355 / FGSC A1100 / Af293) (Neosartorya fumigata).